Reading from the N-terminus, the 125-residue chain is Small ribosomal subunit protein bS6 (125 aa).

The interval 101-125 (PMMKEEKAKNLLAPQSDAAEPTAAA) is disordered.

This sequence belongs to the bacterial ribosomal protein bS6 family.

Its function is as follows. Binds together with bS18 to 16S ribosomal RNA. The polypeptide is Small ribosomal subunit protein bS6 (Laribacter hongkongensis (strain HLHK9)).